The chain runs to 305 residues: Acetaldehyde dehydrogenase (305 aa).

13–16 (SGNI) contributes to the NAD(+) binding site. Cys128 acts as the Acyl-thioester intermediate in catalysis. Residues 159–167 (SAGPGTRQN) and Asn278 each bind NAD(+).

This sequence belongs to the acetaldehyde dehydrogenase family.

The enzyme catalyses acetaldehyde + NAD(+) + CoA = acetyl-CoA + NADH + H(+). This Roseiflexus castenholzii (strain DSM 13941 / HLO8) protein is Acetaldehyde dehydrogenase.